Here is a 276-residue protein sequence, read N- to C-terminus: Large ribosomal subunit protein uL2 (276 aa).

The tract at residues 213–264 is disordered; the sequence is WLGRRPHNRGVVMNPVDHPHGGGEGRTSGGRHPVTPWGKPTKGYKTRTNKRT.

Belongs to the universal ribosomal protein uL2 family. In terms of assembly, part of the 50S ribosomal subunit. Forms a bridge to the 30S subunit in the 70S ribosome.

One of the primary rRNA binding proteins. Required for association of the 30S and 50S subunits to form the 70S ribosome, for tRNA binding and peptide bond formation. It has been suggested to have peptidyltransferase activity; this is somewhat controversial. Makes several contacts with the 16S rRNA in the 70S ribosome. This chain is Large ribosomal subunit protein uL2, found in Granulibacter bethesdensis (strain ATCC BAA-1260 / CGDNIH1).